The following is a 504-amino-acid chain: Maturase K (504 aa).

The protein belongs to the intron maturase 2 family. MatK subfamily.

The protein localises to the plastid. The protein resides in the chloroplast. Usually encoded in the trnK tRNA gene intron. Probably assists in splicing its own and other chloroplast group II introns. The protein is Maturase K of Simmondsia chinensis (Jojoba).